The following is a 397-amino-acid chain: Lysophospholipid transporter LplT (397 aa).

Helical transmembrane passes span 16-36, 53-73, 91-111, 139-159, 164-184, 227-247, 253-273, 281-301, 305-325, 352-372, and 373-393; these read MLAV…LLFA, VLQM…GQFA, LGAG…LVGI, LMES…GILA, LAAL…NLWI, LFWG…PVAL, AMPT…AGAA, TVSR…AFAV, LLPA…FIVP, NVAM…GVPP, and VAVG…LWVW.

Belongs to the major facilitator superfamily. LplT (TC 2.A.1.42) family.

Its subcellular location is the cell inner membrane. Catalyzes the facilitated diffusion of 2-acyl-glycero-3-phosphoethanolamine (2-acyl-GPE) into the cell. In Klebsiella pneumoniae (strain 342), this protein is Lysophospholipid transporter LplT.